Reading from the N-terminus, the 141-residue chain is NADH dehydrogenase [ubiquinone] 1 alpha subcomplex subunit 11 (141 aa).

2 helical membrane passes run 21-43 (KTYI…RVSL) and 58-80 (RYTF…SAQV).

Belongs to the complex I NDUFA11 subunit family. Complex I is composed of 45 different subunits.

It localises to the mitochondrion inner membrane. In terms of biological role, accessory subunit of the mitochondrial membrane respiratory chain NADH dehydrogenase (Complex I), that is believed not to be involved in catalysis. Complex I functions in the transfer of electrons from NADH to the respiratory chain. The immediate electron acceptor for the enzyme is believed to be ubiquinone. This is NADH dehydrogenase [ubiquinone] 1 alpha subcomplex subunit 11 (Ndufa11) from Mus musculus (Mouse).